Reading from the N-terminus, the 49-residue chain is MAQKKVALACTVCGSRNYTIDANPNRTDRLEVKKFCKYCGKHTLHRETR.

The protein belongs to the bacterial ribosomal protein bL33 family.

The polypeptide is Large ribosomal subunit protein bL33 (Lactiplantibacillus plantarum (strain ATCC BAA-793 / NCIMB 8826 / WCFS1) (Lactobacillus plantarum)).